We begin with the raw amino-acid sequence, 62 residues long: Trypsin inhibitor MCI-3 (62 aa).

Belongs to the protease inhibitor I13 (potato type I serine protease inhibitor) family.

This Momordica charantia (Bitter gourd) protein is Trypsin inhibitor MCI-3.